Here is a 360-residue protein sequence, read N- to C-terminus: sn-glycerol-3-phosphate import ATP-binding protein UgpC (360 aa).

Positions 4–235 (LSLKGVRKSY…PATTFVASFI (232 aa)) constitute an ABC transporter domain. Residue 37 to 44 (GPSGCGKS) coordinates ATP.

The protein belongs to the ABC transporter superfamily. sn-glycerol-3-phosphate importer (TC 3.A.1.1.3) family. As to quaternary structure, the complex is composed of two ATP-binding proteins (UgpC), two transmembrane proteins (UgpA and UgpE) and a solute-binding protein (UgpB).

The protein resides in the cell inner membrane. The enzyme catalyses sn-glycerol 3-phosphate(out) + ATP + H2O = sn-glycerol 3-phosphate(in) + ADP + phosphate + H(+). Its function is as follows. Part of the ABC transporter complex UgpBAEC involved in sn-glycerol-3-phosphate (G3P) import. Responsible for energy coupling to the transport system. The sequence is that of sn-glycerol-3-phosphate import ATP-binding protein UgpC from Burkholderia thailandensis (strain ATCC 700388 / DSM 13276 / CCUG 48851 / CIP 106301 / E264).